The chain runs to 947 residues: Beta-glucosidase (947 aa).

The active site involves aspartate 696.

Belongs to the glycosyl hydrolase 3 family.

It catalyses the reaction Hydrolysis of terminal, non-reducing beta-D-glucosyl residues with release of beta-D-glucose.. Its pathway is glycan metabolism; cellulose degradation. This Ruminococcus albus protein is Beta-glucosidase.